Here is a 400-residue protein sequence, read N- to C-terminus: MTKKSIVNLSPADVAGKRVLVRVDFNVPLDGATITDDTRIRAALPTIKDLIEKGAKVILCSHFGRPKGQVVESMRLTPVATRLSELLGQPVVMCDDCIGDSVTAAINQLQNGQVALLENLRFHAEEEANDPEFAQKLAANADLYVNDAFGTAHRAHASTEGVTHYLSPNVAGYLIEKELNYLQAAIENPQRPLVAIIGGSKVSSKIGVIETLLEKCDKLIIGGGMIFTFYKARGLNVGKSLVEDDKLELAKSLEAKAKEKGVDFLLPTDVVLADNFAPDANAKTVSIDAIEDGWMGLDIGPESVKVFQAALADCKSVIWNGPMGVFEFDKFAKGTEAIAHTLAELTGKGTITIIGGGDSVAAVEKVGVADKMSHISTGGGASLELLEGKVLPGIAALDEV.

Residues 24-26, arginine 39, 62-65, arginine 121, and arginine 154 contribute to the substrate site; these read DFN and HFGR. ATP-binding positions include lysine 205, glycine 296, glutamate 327, and 356–359; that span reads GGDS.

This sequence belongs to the phosphoglycerate kinase family. As to quaternary structure, monomer.

It is found in the cytoplasm. The catalysed reaction is (2R)-3-phosphoglycerate + ATP = (2R)-3-phospho-glyceroyl phosphate + ADP. It functions in the pathway carbohydrate degradation; glycolysis; pyruvate from D-glyceraldehyde 3-phosphate: step 2/5. The chain is Phosphoglycerate kinase from Rippkaea orientalis (strain PCC 8801 / RF-1) (Cyanothece sp. (strain PCC 8801)).